The sequence spans 284 residues: 2-dehydro-3-deoxyphosphooctonate aldolase (284 aa).

This sequence belongs to the KdsA family.

It localises to the cytoplasm. The enzyme catalyses D-arabinose 5-phosphate + phosphoenolpyruvate + H2O = 3-deoxy-alpha-D-manno-2-octulosonate-8-phosphate + phosphate. Its pathway is carbohydrate biosynthesis; 3-deoxy-D-manno-octulosonate biosynthesis; 3-deoxy-D-manno-octulosonate from D-ribulose 5-phosphate: step 2/3. The protein operates within bacterial outer membrane biogenesis; lipopolysaccharide biosynthesis. The protein is 2-dehydro-3-deoxyphosphooctonate aldolase of Salmonella arizonae (strain ATCC BAA-731 / CDC346-86 / RSK2980).